The following is a 218-amino-acid chain: Phosphatidylserine decarboxylase proenzyme (218 aa).

The active-site Schiff-base intermediate with substrate; via pyruvic acid is the serine 188. At serine 188 the chain carries Pyruvic acid (Ser); by autocatalysis.

The protein belongs to the phosphatidylserine decarboxylase family. PSD-A subfamily. As to quaternary structure, heterodimer of a large membrane-associated beta subunit and a small pyruvoyl-containing alpha subunit. Pyruvate serves as cofactor. Post-translationally, is synthesized initially as an inactive proenzyme. Formation of the active enzyme involves a self-maturation process in which the active site pyruvoyl group is generated from an internal serine residue via an autocatalytic post-translational modification. Two non-identical subunits are generated from the proenzyme in this reaction, and the pyruvate is formed at the N-terminus of the alpha chain, which is derived from the carboxyl end of the proenzyme. The post-translation cleavage follows an unusual pathway, termed non-hydrolytic serinolysis, in which the side chain hydroxyl group of the serine supplies its oxygen atom to form the C-terminus of the beta chain, while the remainder of the serine residue undergoes an oxidative deamination to produce ammonia and the pyruvoyl prosthetic group on the alpha chain.

The protein localises to the cell membrane. The catalysed reaction is a 1,2-diacyl-sn-glycero-3-phospho-L-serine + H(+) = a 1,2-diacyl-sn-glycero-3-phosphoethanolamine + CO2. It participates in phospholipid metabolism; phosphatidylethanolamine biosynthesis; phosphatidylethanolamine from CDP-diacylglycerol: step 2/2. Functionally, catalyzes the formation of phosphatidylethanolamine (PtdEtn) from phosphatidylserine (PtdSer). The protein is Phosphatidylserine decarboxylase proenzyme of Streptomyces coelicolor (strain ATCC BAA-471 / A3(2) / M145).